The following is an 825-amino-acid chain: Actin filament-associated protein 1-like 2 (825 aa).

Y56 is subject to Phosphotyrosine. The tract at residues 62 to 163 (VNGEQNSASP…SKGKAAPYQW (102 aa)) is disordered. Residues 80–94 (PLTNGEPSQHSSAPQ) are compositionally biased toward polar residues. T113 bears the Phosphothreonine mark. 2 PH domains span residues 175-271 (DARI…EVSG) and 353-447 (SLET…SESG). S408 is subject to Phosphoserine. Y413 bears the Phosphotyrosine mark. S484 carries the phosphoserine modification. The tract at residues 571 to 614 (TLTVDPKPGTTPEEPHTESPGDPEVQQRQPEVQESSEPIEPTPR) is disordered. A compositionally biased stretch (low complexity) spans 593–608 (PEVQQRQPEVQESSEP). Residues 657–754 (AEIKLGKNRT…VKDNLKKAEA (98 aa)) adopt a coiled-coil conformation. The segment at 757-801 (VTLGTTVDTTHLDNMSPRPQPKAATPNPPPDSTPVNSASVLKNRP) is disordered. Positions 759 to 769 (LGTTVDTTHLD) are enriched in polar residues.

As to quaternary structure, interacts with SRC. Interacts with LCK when tyrosine phosphorylated. In terms of processing, tyrosine phosphorylated (by SRC).

The protein resides in the cytoplasm. Functionally, may play a role in a signaling cascade by enhancing the kinase activity of SRC. Contributes to SRC-regulated transcription activation. The sequence is that of Actin filament-associated protein 1-like 2 (Afap1l2) from Mus musculus (Mouse).